Here is a 325-residue protein sequence, read N- to C-terminus: NADH-cytochrome b5 reductase 2 (325 aa).

The chain crosses the membrane as a helical span at residues Val32 to Tyr48. Residues Gln74–Glu179 enclose the FAD-binding FR-type domain. Lys182 to Leu217 serves as a coordination point for FAD.

The protein belongs to the flavoprotein pyridine nucleotide cytochrome reductase family. Requires FAD as cofactor.

It localises to the mitochondrion outer membrane. The enzyme catalyses 2 Fe(III)-[cytochrome b5] + NADH = 2 Fe(II)-[cytochrome b5] + NAD(+) + H(+). May mediate the reduction of outer membrane cytochrome b5. This chain is NADH-cytochrome b5 reductase 2 (MCR1), found in Coccidioides immitis (strain RS) (Valley fever fungus).